We begin with the raw amino-acid sequence, 573 residues long: Phosphoenolpyruvate-protein phosphotransferase (573 aa).

Histidine 190 (tele-phosphohistidine intermediate) is an active-site residue. 2 residues coordinate substrate: arginine 297 and arginine 333. Positions 432 and 456 each coordinate Mg(2+). 455–456 is a binding site for phosphoenolpyruvate; sequence ND. A substrate-binding site is contributed by arginine 466. The active-site Proton donor is cysteine 503.

This sequence belongs to the PEP-utilizing enzyme family. Homodimer. Requires Mg(2+) as cofactor.

It is found in the cytoplasm. It catalyses the reaction L-histidyl-[protein] + phosphoenolpyruvate = N(pros)-phospho-L-histidyl-[protein] + pyruvate. Its function is as follows. General (non sugar-specific) component of the phosphoenolpyruvate-dependent sugar phosphotransferase system (sugar PTS). This major carbohydrate active-transport system catalyzes the phosphorylation of incoming sugar substrates concomitantly with their translocation across the cell membrane. Enzyme I transfers the phosphoryl group from phosphoenolpyruvate (PEP) to the phosphoryl carrier protein (HPr). The polypeptide is Phosphoenolpyruvate-protein phosphotransferase (ptsI) (Staphylococcus carnosus (strain TM300)).